The following is a 360-amino-acid chain: 3-dehydroquinate synthase (360 aa).

Residues 71-76 (DGEQFK), 105-109 (GVIGD), 129-130 (TT), K142, K151, and 169-172 (FLKT) contribute to the NAD(+) site. E184, H247, and H264 together coordinate Zn(2+).

The protein belongs to the sugar phosphate cyclases superfamily. Dehydroquinate synthase family. NAD(+) is required as a cofactor. Co(2+) serves as cofactor. Requires Zn(2+) as cofactor.

It is found in the cytoplasm. It carries out the reaction 7-phospho-2-dehydro-3-deoxy-D-arabino-heptonate = 3-dehydroquinate + phosphate. It participates in metabolic intermediate biosynthesis; chorismate biosynthesis; chorismate from D-erythrose 4-phosphate and phosphoenolpyruvate: step 2/7. Its function is as follows. Catalyzes the conversion of 3-deoxy-D-arabino-heptulosonate 7-phosphate (DAHP) to dehydroquinate (DHQ). The polypeptide is 3-dehydroquinate synthase (Buchnera aphidicola subsp. Schizaphis graminum (strain Sg)).